A 63-amino-acid polypeptide reads, in one-letter code: ATPase inhibitor, mitochondrial (63 aa).

Positions 1 to 23 are disordered; the sequence is TAGATGATRQDGSTDAFEKREKA. A coiled-coil region spans residues 18–62; the sequence is EKREKAQEDLYIRQHEKEQLEALKESLKKQKKSLDDLEBKIDDLT.

It belongs to the ATPase inhibitor family.

The protein localises to the mitochondrion. Its function is as follows. This protein forms a one-to-one complex with ATPase to inhibit the enzyme activity completely. The sequence is that of ATPase inhibitor, mitochondrial from Cyberlindnera jadinii (Torula yeast).